The sequence spans 309 residues: MATSDSEFNSDLLLAHKLPETRYTYNERDVAIYALGIGACGQDAVDSDELKFVYHRNGQDLIQVLPTFASLFTLGSLTEGLDLPGFKYDPSLLLHGQQYIEIYRPLPSKASLINKVSLAGLQDKGKAAILELETRSYEEGSGELLCMNRTTVFLRGAGGFSNSSQPFSYKNYPSNQGLAVKIPQRQPLTVCEERTQPSQALLYRLSGDYNPLHSDPEFAKLAGFPRPILHGLCTLGFAIKAIIKCVCKGDPTAVKTISGRFLTTVFPGETLITEMWLEGLRVIYQTKVKERNKTVLAGYVDIRGLSSSL.

Residues 95-96 (HG), Lys-124, 208-213 (DYNPLH), Gly-231, and Phe-261 each bind substrate. The MaoC-like domain occupies 183 to 295 (PQRQPLTVCE…TKVKERNKTV (113 aa)). Residues 307 to 309 (SSL) carry the Microbody targeting signal motif.

As to expression, ubiquitous.

It is found in the peroxisome. The catalysed reaction is a (3R)-3-hydroxyacyl-CoA = a (2E)-enoyl-CoA + H2O. Its pathway is lipid metabolism; fatty acid beta-oxidation. In terms of biological role, bidirectional monofunctional enoyl-CoA hydratase 2 involved in the degradation of even cis-unsaturated fatty acids. Devoid of 3-hydroxyacyl-CoA dehydrogenase activity. The protein is Enoyl-CoA hydratase 2, peroxisomal (ECH2) of Arabidopsis thaliana (Mouse-ear cress).